We begin with the raw amino-acid sequence, 83 residues long: Kappa-ctenitoxin-Pn1a (83 aa).

The first 21 residues, 1–21, serve as a signal peptide directing secretion; the sequence is MWFKIQVLVLAITLITLGIQA. A propeptide spanning residues 22–37 is cleaved from the precursor; that stretch reads EPNSSPNNPLIVEEDR. 4 disulfides stabilise this stretch: Cys40–Cys55, Cys47–Cys60, Cys54–Cys71, and Cys62–Cys69. The propeptide occupies 78–83; the sequence is LFGFGK.

Belongs to the neurotoxin 02 (plectoxin) family. Expressed by the venom gland.

The protein localises to the secreted. Functionally, antagonist of L-type calcium channels (Cav1/CACNA1). In GH3 neuroendocrinal cell line, it reversibly inhibits the A-type potassium current but does not block other potassium currents or calcium channels. Shows an important acetylcholine-mediated antiarrhythmogenic effect in isolated hearts. In vivo, causes paralysis in the posterior limbs and gradual decreases in movement and aggression during 24 hours at dose levels of 5 ug per mouse. The chain is Kappa-ctenitoxin-Pn1a from Phoneutria nigriventer (Brazilian armed spider).